The following is a 464-amino-acid chain: UDP-glucose:undecaprenyl-phosphate glucose-1-phosphate transferase (464 aa).

The Cytoplasmic segment spans residues Met1–Ser15. The chain crosses the membrane as a helical span at residues Leu16–Val36. The Periplasmic segment spans residues Cys37 to Glu38. A helical transmembrane segment spans residues Val39–Phe59. Residues Gln60–Glu80 are Cytoplasmic-facing. The helical transmembrane segment at Phe81–Phe101 threads the bilayer. At Asn102 to Asp104 the chain is on the periplasmic side. A helical transmembrane segment spans residues Phe105 to Val125. Residues Cys126–Asp278 are Cytoplasmic-facing. Residues Ile279 to Ala299 traverse the membrane as a helical segment. Residues Val300 to Tyr464 are Periplasmic-facing.

This sequence belongs to the bacterial sugar transferase family.

It localises to the cell inner membrane. It catalyses the reaction di-trans,octa-cis-undecaprenyl phosphate + UDP-alpha-D-glucose = alpha-D-glucosyl di-trans,octa-cis-undecaprenyl diphosphate + UMP. It functions in the pathway exopolysaccharide biosynthesis; colanic acid biosynthesis. Is the initiating enzyme for colanic acid (CA) synthesis. Catalyzes the transfer of the glucose-1-phosphate moiety from UDP-Glc onto the carrier lipid undecaprenyl phosphate (C55-P), forming a phosphoanhydride bond yielding to glucosyl-pyrophosphoryl-undecaprenol (Glc-PP-C55). Also possesses a weak galactose-1-P transferase activity. This chain is UDP-glucose:undecaprenyl-phosphate glucose-1-phosphate transferase (wcaJ), found in Escherichia coli (strain K12).